Reading from the N-terminus, the 228-residue chain is RNA chaperone ProQ (228 aa).

Residues 107 to 178 form a disordered region; it reads KARVQAQRAE…REEKHTPVSD (72 aa). Basic and acidic residues-rich tracts occupy residues 117-136 and 146-175; these read QQAK…DAPR and RRKE…KHTP.

The protein belongs to the ProQ family.

The protein localises to the cytoplasm. RNA chaperone with significant RNA binding, RNA strand exchange and RNA duplexing activities. May regulate ProP activity through an RNA-based, post-transcriptional mechanism. This chain is RNA chaperone ProQ, found in Salmonella agona (strain SL483).